The primary structure comprises 871 residues: MNGTSPDESPDSTTQRIDSFNGEQRVYFVPLRWWKDAQDSMPSESVEKREILYTASCGSSYGGPMKLINNIFNSDILFDLRREGDALQNGETGEASVSGRDFALVSSDMWLQALKWYHDDKNTEKGVKSFSAGGVDRGDVYPVQLRLSVLQETNSLAVKICKKDNSVECFRRACKIFSLDSEQLRIWDISGQTTLFFESDVSNSKDCQQQADQEILLELQIYGLSDSIKLKESKKEDGSTQQTNGITNGMNGGTVFRFGRSNSLSFLGKAGEAGTLGLTGLQNLGNTCFMNSSLQCLAHTPKLVDFFLGEYSKEINLDNPLGMKGEIALAFGDLLRSLWAPGASTVAPRTFKAKLARFAPQFSGFNQHDSQELLAFLLDGLHEDLNRVKNKPYVEAKDGDGRPDAEVADEYWRNHVARNDSIIVDVCQGQYKSTLVCPICKKVSVMFDPFMYLSLPLPCTSMRTMDLTVMSADGSSLPIPLTVNVPKFGKFEDLHKALVTACSLPEEETLLVTEVYNNRIIRFLEEPTDSLTLIRDGDKLVVYRLKKDANNSPLIVYMHQKLEEQFISGKSSPTWKAFGIPLVSRLCDVENGSDVENLYLKLLSSFKMPTEFFTENLENPTEEEATDKTDTDGTTSVEDTNSTDVKETTESLPDPVLRLYLTDDRGNSIEAEMLKEKPVNKSKRLNVLARWPVKELDVYDTCLLSSLPEVSKSGTKRPQESVSLFKCLEAFLTEEPLGPDDMWYCPGCKEHRQAIKKLDLWRLPEILVIHLKRFSYSRFMKNKLEAYVDFPLDNLDLSSYISYKNGQTTYRYMLYAISNHYGSMGGGHYTAYVHHGGDRWYDFDDSHVHQISQEKIKTSAAYVLFYKRLVD.

The DUSP domain maps to 4–99 (TSPDESPDST…GETGEASVSG (96 aa)). The region spanning 279–869 (TGLQNLGNTC…AAYVLFYKRL (591 aa)) is the USP domain. Catalysis depends on Cys288, which acts as the Nucleophile. Residues 615–650 (ENLENPTEEEATDKTDTDGTTSVEDTNSTDVKETTE) are disordered. His828 (proton acceptor) is an active-site residue.

This sequence belongs to the peptidase C19 family.

It carries out the reaction Thiol-dependent hydrolysis of ester, thioester, amide, peptide and isopeptide bonds formed by the C-terminal Gly of ubiquitin (a 76-residue protein attached to proteins as an intracellular targeting signal).. In terms of biological role, recognizes and hydrolyzes the peptide bond at the C-terminal Gly of ubiquitin. Involved in the processing of poly-ubiquitin precursors as well as that of ubiquitinated proteins. In Arabidopsis thaliana (Mouse-ear cress), this protein is Ubiquitin carboxyl-terminal hydrolase 8 (UBP8).